Consider the following 177-residue polypeptide: ATP synthase subunit delta (177 aa).

Belongs to the ATPase delta chain family. As to quaternary structure, F-type ATPases have 2 components, F(1) - the catalytic core - and F(0) - the membrane proton channel. F(1) has five subunits: alpha(3), beta(3), gamma(1), delta(1), epsilon(1). F(0) has three main subunits: a(1), b(2) and c(10-14). The alpha and beta chains form an alternating ring which encloses part of the gamma chain. F(1) is attached to F(0) by a central stalk formed by the gamma and epsilon chains, while a peripheral stalk is formed by the delta and b chains.

The protein localises to the cell inner membrane. In terms of biological role, f(1)F(0) ATP synthase produces ATP from ADP in the presence of a proton or sodium gradient. F-type ATPases consist of two structural domains, F(1) containing the extramembraneous catalytic core and F(0) containing the membrane proton channel, linked together by a central stalk and a peripheral stalk. During catalysis, ATP synthesis in the catalytic domain of F(1) is coupled via a rotary mechanism of the central stalk subunits to proton translocation. Functionally, this protein is part of the stalk that links CF(0) to CF(1). It either transmits conformational changes from CF(0) to CF(1) or is implicated in proton conduction. The chain is ATP synthase subunit delta from Flavobacterium johnsoniae (strain ATCC 17061 / DSM 2064 / JCM 8514 / BCRC 14874 / CCUG 350202 / NBRC 14942 / NCIMB 11054 / UW101) (Cytophaga johnsonae).